The sequence spans 29 residues: Potassium-transporting ATPase KdpF subunit (29 aa).

The chain crosses the membrane as a helical span at residues 2-22 (LIGEAVLAVVTVAVVAYLTYV).

Belongs to the KdpF family. In terms of assembly, the system is composed of three essential subunits: KdpA, KdpB and KdpC. The complex also contains KdpF, a small non-essential subunit.

It is found in the cell membrane. Part of the high-affinity ATP-driven potassium transport (or Kdp) system, which catalyzes the hydrolysis of ATP coupled with the electrogenic transport of potassium into the cytoplasm. This subunit may be involved in stabilization of the complex. The Kdp system is essential for growth under K(+) limitation, and for survival under desiccation and salt crystal inclusion. The sequence is that of Potassium-transporting ATPase KdpF subunit from Halobacterium salinarum (strain ATCC 29341 / DSM 671 / R1).